Consider the following 216-residue polypeptide: Cytochrome c biogenesis ATP-binding export protein CcmA (216 aa).

Positions leucine 11 to valine 216 constitute an ABC transporter domain. An ATP-binding site is contributed by glycine 43–threonine 50.

This sequence belongs to the ABC transporter superfamily. CcmA exporter (TC 3.A.1.107) family. The complex is composed of two ATP-binding proteins (CcmA) and two transmembrane proteins (CcmB).

Its subcellular location is the cell inner membrane. It catalyses the reaction heme b(in) + ATP + H2O = heme b(out) + ADP + phosphate + H(+). Part of the ABC transporter complex CcmAB involved in the biogenesis of c-type cytochromes; once thought to export heme, this seems not to be the case, but its exact role is uncertain. Responsible for energy coupling to the transport system. This Shewanella frigidimarina (strain NCIMB 400) protein is Cytochrome c biogenesis ATP-binding export protein CcmA.